The primary structure comprises 654 residues: MESSAVVPGTTAPLLPYAYAPLPSSADDARENQSSGGVRWRVCAAVLAASALAVLIVVGLLAGGRVDRGPAGGDVASAAVPAVPMEIPRSRGKDFGVSEKASGAYSADGGFPWSNAMLQWQRTGFHFQPEKHYMNDPNGPVYYGGWYHLFYQYNPKGDSWGNIAWAHAVSKDMVNWRHLPLAMVPDQWYDSNGVLTGSITVLPDGQVILLYTGNTDTLAQVQCLATPADPSDPLLREWIKHPANPILYPPPGIGLKDFRDPLTAWFDHSDNTWRTVIGSKDDDGHAGIILSYKTKDFVNYELMPGNMHRGPDGTGMYECIDLYPVGGNSSEMLGGDDSPDVLFVLKESSDDERHDYYALGRFDAAANIWTPIDQELDLGIGLRYDWGKYYASKSFYDQKKNRRIVWAYIGETDSEQADITKGWANLMTIPRTVELDKKTRTNLIQWPVEELDTLRRNSTDLSGITVDAGSVIRLPLHQGAQIDIEASFQLNSSDVDALTEADVSYNCSTSGAAVRGALGPFGLLVLANGRTEQTAVYFYVSKGVDGALQTHFCHDESRSTQAKDVVNRMIGSIVPVLDGETFSVRVLVDHSIVQSFAMGGRITATSRAYPTEAIYAAAGVYLFNNATGATVTAERLVVYEMASADNHIFTNDDL.

Residues 1 to 106 constitute a propeptide that is removed on maturation; the sequence is MESSAVVPGT…VSEKASGAYS (106 aa). N-linked (GlcNAc...) asparagine glycosylation is present at N32. The active site involves D136. N-linked (GlcNAc...) asparagine glycosylation is found at N328, N457, N491, N506, and N625.

This sequence belongs to the glycosyl hydrolase 32 family. Monomer. Accumulates at the base of growing leaves.

It localises to the vacuole. It catalyses the reaction 2 sucrose = 1(F)-beta-D-fructosylsucrose + D-glucose. Functionally, transferase involved in fructan biosynthesis that catalyzes the production of 1-kestose (fructose and nystose to a lower extent) from sucrose. Also exhibits some hydrolase activity toward 1-kestose, thus producing fructose and sucrose. A weak fructosyltransferase activity leads to the formation of nystose from 1-kestose. The chain is Sucrose:sucrose 1-fructosyltransferase (1-SST) from Festuca arundinacea (Tall fescue).